Consider the following 373-residue polypeptide: tRNA-specific 2-thiouridylase MnmA (373 aa).

Residues 12-19 and methionine 38 contribute to the ATP site; that span reads GMSGGVDS. The tract at residues 98 to 100 is interaction with target base in tRNA; the sequence is NPD. Cysteine 103 acts as the Nucleophile in catalysis. A disulfide bond links cysteine 103 and cysteine 200. Glycine 127 contributes to the ATP binding site. The interaction with tRNA stretch occupies residues 150 to 152; sequence KDQ. Cysteine 200 acts as the Cysteine persulfide intermediate in catalysis. The segment at 312–313 is interaction with tRNA; the sequence is RY.

This sequence belongs to the MnmA/TRMU family.

Its subcellular location is the cytoplasm. The enzyme catalyses S-sulfanyl-L-cysteinyl-[protein] + uridine(34) in tRNA + AH2 + ATP = 2-thiouridine(34) in tRNA + L-cysteinyl-[protein] + A + AMP + diphosphate + H(+). Functionally, catalyzes the 2-thiolation of uridine at the wobble position (U34) of tRNA, leading to the formation of s(2)U34. The protein is tRNA-specific 2-thiouridylase MnmA of Streptococcus pyogenes serotype M18 (strain MGAS8232).